The sequence spans 194 residues: Sigma factor AlgU negative regulatory protein (194 aa).

The chain crosses the membrane as a helical span at residues 89-105 (LAVAASVTLAVLAGVRL).

Belongs to the RseA family.

It is found in the cell membrane. Functionally, negative regulator of the sigma factor AlgU. Plays a role in the differentiation of P.aeruginosa into the alginate-producing form. Inactivation of mucA causes a switch from the non-mucoid to mucoid state resulting in constitutive expression of alginate biosynthetic genes. The chain is Sigma factor AlgU negative regulatory protein (mucA) from Pseudomonas aeruginosa (strain ATCC 15692 / DSM 22644 / CIP 104116 / JCM 14847 / LMG 12228 / 1C / PRS 101 / PAO1).